A 555-amino-acid polypeptide reads, in one-letter code: MNVDAEASMAVISLLFLAVMYVVHHPLMVSDRMDLDTLARSRQLEKRMSEEMRLLEMEFEERKRAAEQRQKAENFWTGDTSSDQLVLGKKDMGWPFQADGQEGPLGWMLGNLWNTGLFCLFLVFELLRQNMQHEPAFDSSSEEEEEEVRVVPVTSYNWLTDFPSQEALDSFYKHYVQNAIRDLPCTCEFVESFVDDLIEACRVLSRQEAHPQLEDCLGIGAAFEKWGTLHETQKFDILVPIVPPQGTMFVLEMRDPALGRRCGCVLVESECVCKREKLLGDVLCLVHHHRDPSAVLGKCSSSIKAALCTGFHLDVCKTVQWFRNMMGNAWALVAHKYDFKLSLPPSTTSCKLRLDYRSGRFLSIHLVLGVQREDTLVYLVSQAPDQEQLTSVDWPESFVACEHLFLKLVGRFAPENTCHLKCLQIILSLRQHQSLPHGASRPILTSYHFKTALMHLLLRLPLTDWAHNMLSQRLQDILWFLGRGLQQRSLHHFLIGNNFLPLTIPIPKTFRNAEPVNLFQHLVLNPKAHSQAVEEFQNLLTQVKTLPHAPLAAAP.

A signal peptide spans 1–24; sequence MNVDAEASMAVISLLFLAVMYVVH. Over 25–103 the chain is Extracellular; the sequence is HPLMVSDRMD…WPFQADGQEG (79 aa). The stretch at 38–74 forms a coiled coil; sequence LARSRQLEKRMSEEMRLLEMEFEERKRAAEQRQKAEN. The helical transmembrane segment at 104–124 threads the bilayer; the sequence is PLGWMLGNLWNTGLFCLFLVF. Residues 125-555 are Cytoplasmic-facing; the sequence is ELLRQNMQHE…LPHAPLAAAP (431 aa).

The protein belongs to the ITPRIP family. As to expression, expressed in testis and tumoral cells.

Its subcellular location is the cell membrane. Functions as a ligand of CD3E, inhibiting TCR-CD3 complex signaling to regulate T cell activation. Induces stable CD3E-NCK1 binding, thereby preventing the CD3E-ZAP70 interaction and subsequently inhibiting the activation of the downstream ERK-NFkB signaling cascade and calcium influx. This Homo sapiens (Human) protein is Inositol 1,4,5-trisphosphate receptor-interacting protein-like 1.